The following is a 266-amino-acid chain: Tryptophan synthase alpha chain (266 aa).

Residues E49 and D60 each act as proton acceptor in the active site.

The protein belongs to the TrpA family. Tetramer of two alpha and two beta chains.

The catalysed reaction is (1S,2R)-1-C-(indol-3-yl)glycerol 3-phosphate + L-serine = D-glyceraldehyde 3-phosphate + L-tryptophan + H2O. Its pathway is amino-acid biosynthesis; L-tryptophan biosynthesis; L-tryptophan from chorismate: step 5/5. The alpha subunit is responsible for the aldol cleavage of indoleglycerol phosphate to indole and glyceraldehyde 3-phosphate. This is Tryptophan synthase alpha chain from Thioalkalivibrio sulfidiphilus (strain HL-EbGR7).